Consider the following 320-residue polypeptide: MARKKIALIGSGMIGGTLAHLASLKELGDIVLFDIADGIPQGKGLDIAQSGPVEGFNAKLSGASDYAAIEGADVCIVTAGVARKPGMSRDDLLGINLKVMEQVGAGIKKYAPNAFVICITNPLDAMVWALQKFSGLPKNKVVGMAGVLDSARFRLFLAEEFNVSVQDVTAFVLGGHGDTMVPLARYSTVGGVPLTDLVKMGWLTAERLEQIIQRTRDGGAEIVGLLKTGSAYYAPAASAIEMAESYLKDKKRVLPAAAHLSGQYGVDDMYVGVPTIIGAGGIERVIEIELNKEEEAAFQKSVGAVAGLCEACINIAPSLK.

Residues 10-15 and Asp34 each bind NAD(+); that span reads GSGMIG. Residues Arg83 and Arg89 each coordinate substrate. NAD(+)-binding positions include Asn96 and 119-121; that span reads ITN. Substrate-binding residues include Asn121 and Arg152. The active-site Proton acceptor is His176.

It belongs to the LDH/MDH superfamily. MDH type 3 family.

It carries out the reaction (S)-malate + NAD(+) = oxaloacetate + NADH + H(+). Functionally, catalyzes the reversible oxidation of malate to oxaloacetate. The chain is Malate dehydrogenase from Agrobacterium fabrum (strain C58 / ATCC 33970) (Agrobacterium tumefaciens (strain C58)).